The chain runs to 24 residues: Hemocyanin subunit 4e (24 aa).

This sequence belongs to the tyrosinase family. Hemocyanin subfamily. As to expression, hemolymph.

The protein resides in the secreted. The protein localises to the extracellular space. Its function is as follows. Hemocyanins are copper-containing oxygen carriers occurring freely dissolved in the hemolymph of many mollusks and arthropods. The chain is Hemocyanin subunit 4e from Maja squinado (Mediterranean spider crab).